A 259-amino-acid polypeptide reads, in one-letter code: Glutamate racemase (259 aa).

Substrate-binding positions include 9–10 (DS) and 41–42 (YG). Residue Cys-73 is the Proton donor/acceptor of the active site. 74 to 75 (NT) lines the substrate pocket. The active-site Proton donor/acceptor is Cys-183. Substrate is bound at residue 184 to 185 (TH).

Belongs to the aspartate/glutamate racemases family.

The enzyme catalyses L-glutamate = D-glutamate. Its pathway is cell wall biogenesis; peptidoglycan biosynthesis. Functionally, provides the (R)-glutamate required for cell wall biosynthesis. The protein is Glutamate racemase of Shewanella frigidimarina (strain NCIMB 400).